The following is a 119-amino-acid chain: Large ribosomal subunit protein uL18 (119 aa).

Belongs to the universal ribosomal protein uL18 family. In terms of assembly, part of the 50S ribosomal subunit; part of the 5S rRNA/L5/L18/L25 subcomplex. Contacts the 5S and 23S rRNAs.

Its function is as follows. This is one of the proteins that bind and probably mediate the attachment of the 5S RNA into the large ribosomal subunit, where it forms part of the central protuberance. The polypeptide is Large ribosomal subunit protein uL18 (Chlorobium phaeovibrioides (strain DSM 265 / 1930) (Prosthecochloris vibrioformis (strain DSM 265))).